A 120-amino-acid chain; its full sequence is UPF0102 protein TW312 (120 aa).

It belongs to the UPF0102 family.

This Tropheryma whipplei (strain TW08/27) (Whipple's bacillus) protein is UPF0102 protein TW312.